Consider the following 186-residue polypeptide: Elongation factor P (186 aa).

This sequence belongs to the elongation factor P family.

Its subcellular location is the cytoplasm. Its pathway is protein biosynthesis; polypeptide chain elongation. Its function is as follows. Involved in peptide bond synthesis. Stimulates efficient translation and peptide-bond synthesis on native or reconstituted 70S ribosomes in vitro. Probably functions indirectly by altering the affinity of the ribosome for aminoacyl-tRNA, thus increasing their reactivity as acceptors for peptidyl transferase. This is Elongation factor P from Shewanella loihica (strain ATCC BAA-1088 / PV-4).